A 71-amino-acid polypeptide reads, in one-letter code: Conotoxin Lt11.3 (71 aa).

A signal peptide spans 1-26 (MMFRLTSVGCILLVIAFLNLVGLTNA). Disulfide bonds link C27-C41, C34-C46, C40-C50, and C45-C54. P57 is subject to Proline amide. Positions 61-71 (TRLQGFFKHRR) are excised as a propeptide.

The protein belongs to the conotoxin I2 superfamily. In terms of tissue distribution, expressed by the venom duct.

The protein resides in the secreted. Functionally, probable neurotoxin. The chain is Conotoxin Lt11.3 from Conus litteratus (Lettered cone).